The chain runs to 355 residues: Peptide chain release factor 1 (355 aa).

Position 231 is an N5-methylglutamine (glutamine 231). The span at 280–291 (SERLAKESEARK) shows a compositional bias: basic and acidic residues. The interval 280-303 (SERLAKESEARKSQVGSGDRSERI) is disordered.

It belongs to the prokaryotic/mitochondrial release factor family. In terms of processing, methylated by PrmC. Methylation increases the termination efficiency of RF1.

The protein resides in the cytoplasm. In terms of biological role, peptide chain release factor 1 directs the termination of translation in response to the peptide chain termination codons UAG and UAA. The protein is Peptide chain release factor 1 of Campylobacter jejuni (strain RM1221).